The chain runs to 417 residues: MTTQLGPALVLGVALCLGCGQPLPQVPERPFSVLWNVPSAHCEARFGVHLPLNALGIIANRGQHFHGQNMTIFYKNQLGLYPYFGPRGTAHNGGIPQALPLDRHLALAAYQIHHSLRPGFAGPAVLDWEEWCPLWAGNWGRRRAYQAASWAWAQQVFPDLDPQEQLYKAYTGFEQAARALMEDTLRVAQALRPHGLWGFYHYPACGNGWHSMASNYTGRCHAATLARNTQLHWLWAASSALFPSIYLPPRLPPAHHQAFVRHRLEEAFRVALVGHRHPLPVLAYVRLTHRRSGRFLSQDDLVQSIGVSAALGAAGVVLWGDLSLSSSEEECWHLHDYLVDTLGPYVINVTRAAMACSHQRCHGHGRCARRDPGQMEAFLHLWPDGSLGDWKSFSCHCYWGWAGPTCQEPRPGPKEAV.

The first 20 residues, 1–20, serve as a signal peptide directing secretion; sequence MTTQLGPALVLGVALCLGCG. 5 cysteine pairs are disulfide-bonded: cysteine 42/cysteine 331, cysteine 205/cysteine 220, cysteine 356/cysteine 367, cysteine 361/cysteine 395, and cysteine 397/cysteine 406. An N-linked (GlcNAc...) asparagine glycan is attached at asparagine 69. The Proton donor role is filled by glutamate 129. Residue asparagine 215 is glycosylated (N-linked (GlcNAc...) asparagine). The EGF-like domain occupies 352 to 407; that stretch reads AAMACSHQRCHGHGRCARRDPGQMEAFLHLWPDGSLGDWKSFSCHCYWGWAGPTCQ.

This sequence belongs to the glycosyl hydrolase 56 family. Post-translationally, N-glycosylated. As to expression, expressed in sperm. Highly expressed in epidermis of the skin, where it is expressed intracellularily in the deep horny layer (at protein level). Bone marrow, testis and kidney.

The protein resides in the secreted. It is found in the cell membrane. Its subcellular location is the cytoplasmic vesicle. It localises to the secretory vesicle. The protein localises to the acrosome. The protein resides in the endoplasmic reticulum. It is found in the early endosome. It carries out the reaction Random hydrolysis of (1-&gt;4)-linkages between N-acetyl-beta-D-glucosamine and D-glucuronate residues in hyaluronate.. Facilitates sperm penetration into the layer of cumulus cells surrounding the egg by digesting hyaluronic acid. Involved in induction of the acrosome reaction in the sperm. Involved in follicular atresia, the breakdown of immature ovarian follicles that are not selected to ovulate. Induces ovarian granulosa cell apoptosis, possibly via apoptotic signaling pathway involving CASP8 and CASP3 activation, and poly(ADP-ribose) polymerase (PARP) cleavage. Has no hyaluronidase activity in embryonic fibroblasts in vitro. Has no hyaluronidase activity in granulosa cells in vitro. The polypeptide is Hyaluronidase-3 (HYAL3) (Homo sapiens (Human)).